A 444-amino-acid chain; its full sequence is E3 ubiquitin-protein ligase APD2 (444 aa).

A compositionally biased stretch (low complexity) spans 1-15 (MSLPDSLPSSSSSPP). The disordered stretch occupies residues 1 to 41 (MSLPDSLPSSSSSPPVTREETGFHRFEHHGNDSGFDHRDRP). The segment covering 17–41 (TREETGFHRFEHHGNDSGFDHRDRP) has biased composition (basic and acidic residues). 2 helical membrane-spanning segments follow: residues 74–94 (VVVVATFCIFVSMTLILGLYG) and 312–332 (IAYIVCMGVVTALLLIVSSLF). The RING-type zinc finger occupies 393–432 (CAICYDAPRDCFFLSCGHCVACFQCGTRIAETSGFCPVCR).

In terms of assembly, interacts with At1g78040, At1g10650, VHA-c4/AVAP4, VHA-c''2/VMA16 and TUFA. As to expression, expressed in the shoot apical meristems (SAM), root tips, pollen and inflorescences.

It localises to the endomembrane system. It catalyses the reaction S-ubiquitinyl-[E2 ubiquitin-conjugating enzyme]-L-cysteine + [acceptor protein]-L-lysine = [E2 ubiquitin-conjugating enzyme]-L-cysteine + N(6)-ubiquitinyl-[acceptor protein]-L-lysine.. It participates in protein modification; protein ubiquitination. In terms of biological role, exhibits E2-dependent E3 ligase activity. Involved in pollen mitosis II (PMII) regulation during male gametogenesis. The chain is E3 ubiquitin-protein ligase APD2 from Arabidopsis thaliana (Mouse-ear cress).